The sequence spans 421 residues: Acyl-coenzyme A thioesterase 5 (421 aa).

Active-site charge relay system residues include Ser-232, Asp-326, and His-360. Residues 419-421 carry the Microbody targeting signal motif; sequence AKL.

This sequence belongs to the C/M/P thioester hydrolase family. In terms of tissue distribution, highly expressed in spleen, brain, testis and proximal and distal intestine; expressed at low level in the liver.

It is found in the peroxisome. It catalyses the reaction hexadecanoyl-CoA + H2O = hexadecanoate + CoA + H(+). It carries out the reaction decanoyl-CoA + H2O = decanoate + CoA + H(+). The enzyme catalyses octanoyl-CoA + H2O = octanoate + CoA + H(+). The catalysed reaction is dodecanoyl-CoA + H2O = dodecanoate + CoA + H(+). It catalyses the reaction tetradecanoyl-CoA + H2O = tetradecanoate + CoA + H(+). It carries out the reaction octadecanoyl-CoA + H2O = octadecanoate + CoA + H(+). The enzyme catalyses eicosanoyl-CoA + H2O = eicosanoate + CoA + H(+). The catalysed reaction is (9Z)-octadecenoyl-CoA + H2O = (9Z)-octadecenoate + CoA + H(+). It catalyses the reaction (9Z,12Z)-octadecadienoyl-CoA + H2O = (9Z,12Z)-octadecadienoate + CoA + H(+). It carries out the reaction (5Z,8Z,11Z,14Z)-eicosatetraenoyl-CoA + H2O = (5Z,8Z,11Z,14Z)-eicosatetraenoate + CoA + H(+). The enzyme catalyses (9Z)-hexadecenoyl-CoA + H2O = (9Z)-hexadecenoate + CoA + H(+). The protein operates within lipid metabolism; fatty acid metabolism. Its function is as follows. Catalyzes the hydrolysis of acyl-CoAs into free fatty acids and coenzyme A (CoASH), regulating their respective intracellular levels. Mainly active on medium-chain acyl-CoAs. Seems to be involved in intraperoxisomal regulation of acyl-CoA levels, but not CoASH levels. May have a function in termination of beta-oxidation of fatty acids. The polypeptide is Acyl-coenzyme A thioesterase 5 (Acot5) (Mus musculus (Mouse)).